Consider the following 183-residue polypeptide: MKLIGITGMPGSGKSAITKLAEKYKIVVVSMGDVVRYETLKQGMPLNPENVGNTAVKLREIYGKEAIAVPCLNYVNEKYNNEDFVIIEGIRSIYEVNYIKKHAELDIIAIHSSPKTRFERLSGRNREDDSNDWNTFVERDERELNFSIGRVISLADYMVVNEGNYMDFVNDLENTFKKIINVN.

8 to 15 (GMPGSGKS) lines the ATP pocket.

This sequence belongs to the UPF0200 family.

The chain is UPF0200 protein MMP1282 from Methanococcus maripaludis (strain DSM 14266 / JCM 13030 / NBRC 101832 / S2 / LL).